Here is a 171-residue protein sequence, read N- to C-terminus: Co-chaperone protein HscB (171 aa).

One can recognise a J domain in the interval 2–74 (DYFTLFGLPA…LTRAEYLLSL (73 aa)).

It belongs to the HscB family. In terms of assembly, interacts with HscA and stimulates its ATPase activity. Interacts with IscU.

Its function is as follows. Co-chaperone involved in the maturation of iron-sulfur cluster-containing proteins. Seems to help targeting proteins to be folded toward HscA. This is Co-chaperone protein HscB from Salmonella choleraesuis (strain SC-B67).